Here is a 342-residue protein sequence, read N- to C-terminus: S-adenosylmethionine:tRNA ribosyltransferase-isomerase (342 aa).

It belongs to the QueA family. As to quaternary structure, monomer.

The protein resides in the cytoplasm. It carries out the reaction 7-aminomethyl-7-carbaguanosine(34) in tRNA + S-adenosyl-L-methionine = epoxyqueuosine(34) in tRNA + adenine + L-methionine + 2 H(+). The protein operates within tRNA modification; tRNA-queuosine biosynthesis. Its function is as follows. Transfers and isomerizes the ribose moiety from AdoMet to the 7-aminomethyl group of 7-deazaguanine (preQ1-tRNA) to give epoxyqueuosine (oQ-tRNA). The chain is S-adenosylmethionine:tRNA ribosyltransferase-isomerase from Shouchella clausii (strain KSM-K16) (Alkalihalobacillus clausii).